The sequence spans 669 residues: CoB--CoM heterodisulfide reductase iron-sulfur subunit A 1 (669 aa).

153–176 (GGGIAGIQAALDLADQGFKVYLVE) contributes to the FAD binding site. Residue selenocysteine 200 is a non-standard amino acid, selenocysteine. 4Fe-4S ferredoxin-type domains lie at 239–270 (KKPRYVDEDACTGCGVCAEVCPIEVPNEFDLG), 287–318 (LVYTIDMEHCIQCGLCEEACPQDPPAIDFDQE), 584–613 (ITATVDEDVCGGCGACAQVCPFDAIEMVEK), and 617–646 (RVAEVQDVACQGCGQCAAACPSGAMQLRYY). [4Fe-4S] cluster contacts are provided by cysteine 249, cysteine 252, cysteine 255, cysteine 259, cysteine 296, cysteine 299, cysteine 302, cysteine 306, cysteine 593, cysteine 596, cysteine 599, cysteine 603, cysteine 626, cysteine 629, cysteine 632, and cysteine 636.

It belongs to the HdrA family. In terms of assembly, the ferredoxin:CoB-CoM heterodisulfide reductase is composed of three subunits; HdrA, HdrB and HdrC. It depends on [4Fe-4S] cluster as a cofactor. Requires FAD as cofactor.

It functions in the pathway cofactor metabolism; coenzyme M-coenzyme B heterodisulfide reduction; coenzyme B and coenzyme M from coenzyme M-coenzyme B heterodisulfide: step 1/1. Functionally, part of a complex that catalyzes the reversible reduction of CoM-S-S-CoB to the thiol-coenzymes H-S-CoM (coenzyme M) and H-S-CoB (coenzyme B). This is CoB--CoM heterodisulfide reductase iron-sulfur subunit A 1 (hdrA1) from Methanopyrus kandleri (strain AV19 / DSM 6324 / JCM 9639 / NBRC 100938).